Here is a 454-residue protein sequence, read N- to C-terminus: Transcription factor bHLH123 (454 aa).

Positions 101–113 (SNANANTTSSTSS) are enriched in low complexity. Disordered regions lie at residues 101–127 (SNAN…HHQA), 185–228 (ATTT…QFGS), 270–348 (AAAG…KRKE), and 398–417 (GASL…VSEE). Polar residues-rich tracts occupy residues 185–195 (ATTTTPNSSSG) and 207–228 (SSDQ…QFGS). The segment covering 303 to 324 (EQPKNISEIRDSSSNEVKRGGN) has biased composition (basic and acidic residues). Residues 334–383 (KSEAASPSPAFKRKEKMGDRIAALQQLVSPFGKTDAASVLSEAIEYIKFL) form the bHLH domain.

Homodimer.

It is found in the nucleus. This chain is Transcription factor bHLH123 (BHLH123), found in Arabidopsis thaliana (Mouse-ear cress).